The primary structure comprises 187 residues: UPF0398 protein LBA1157 (187 aa).

This sequence belongs to the UPF0398 family.

The chain is UPF0398 protein LBA1157 from Lactobacillus acidophilus (strain ATCC 700396 / NCK56 / N2 / NCFM).